The chain runs to 510 residues: 2,3-bisphosphoglycerate-independent phosphoglycerate mutase (510 aa).

The Mn(2+) site is built by Asp-12 and Ser-62. The Phosphoserine intermediate role is filled by Ser-62. Substrate-binding positions include His-123, 153-154, Arg-185, Arg-191, 261-264, and Lys-336; these read RD and RPDR. Residues Asp-403, His-407, Asp-444, His-445, and His-462 each contribute to the Mn(2+) site.

This sequence belongs to the BPG-independent phosphoglycerate mutase family. In terms of assembly, monomer. The cofactor is Mn(2+).

The catalysed reaction is (2R)-2-phosphoglycerate = (2R)-3-phosphoglycerate. It participates in carbohydrate degradation; glycolysis; pyruvate from D-glyceraldehyde 3-phosphate: step 3/5. Essential for rapid growth and for sporulation. Catalyzes the interconversion of 2-phosphoglycerate and 3-phosphoglycerate. In Priestia megaterium (strain DSM 319 / IMG 1521) (Bacillus megaterium), this protein is 2,3-bisphosphoglycerate-independent phosphoglycerate mutase.